The chain runs to 27 residues: Secretin (27 aa).

Valine 27 bears the Valine amide mark.

It belongs to the glucagon family.

Its subcellular location is the secreted. Functionally, hormone involved in different processes, such as regulation of the pH of the duodenal content, food intake and water homeostasis. Exerts its biological effects by binding to secretin receptor (SCTR), a G-protein coupled receptor expressed in the basolateral domain of several cells. Acts as a key gastrointestinal hormone by regulating the pH of the duodenal content. Secreted by S cells of the duodenum in the crypts of Lieberkuehn and regulates the pH of the duodenum by (1) inhibiting the secretion of gastric acid from the parietal cells of the stomach and (2) stimulating the production of bicarbonate (NaHCO(3)) from the ductal cells of the pancreas. Production of bicarbonate is essential to neutralize the pH and ensure no damage is done to the small intestine by the gastric acid. In addition to regulating the pH of the duodenal content, plays a central role in diet induced thermogenesis: acts as a non-sympathetic brown fat (BAT) activator mediating prandial thermogenesis, which consequentially induces satiation. Mechanistically, secretin released by the gut after a meal binds to secretin receptor (SCTR) in brown adipocytes, activating brown fat thermogenesis by stimulating lipolysis, which is sensed in the brain and promotes satiation. Also able to stimulate lipolysis in white adipocytes. Also plays an important role in cellular osmoregulation: released into the systemic circulation in response to hyperosmolality and acts at different levels in the hypothalamus, pituitary and kidney to regulate water homeostasis. Also plays a role in the central nervous system, possibly by acting as a neuropeptide hormone: required for hippocampal synaptic function and neural progenitor cells maintenance. The polypeptide is Secretin (Canis lupus familiaris (Dog)).